Reading from the N-terminus, the 190-residue chain is Ion-translocating oxidoreductase complex subunit B (190 aa).

The tract at residues 1–26 is hydrophobic; sequence MLTFWLAVATLSALALVAGAVLGFAA. The 59-residue stretch at 32-90 folds into the 4Fe-4S domain; the sequence is KTDPVAERIDALLPQSQCAQCGYPGCRPYAEAVAGGAPINKCVPGGEAVMLKIAAQLSV. The [4Fe-4S] cluster site is built by cysteine 49, cysteine 52, cysteine 57, cysteine 73, cysteine 115, cysteine 118, cysteine 121, cysteine 125, cysteine 145, cysteine 148, cysteine 151, and cysteine 155. 4Fe-4S ferredoxin-type domains lie at 106–135 and 136–165; these read RVAWIDEGNCIGCTKCIQACPVDAIVGATR and AVHTVVSDLCTGCDLCVAPCPTNCIEMRPL.

Belongs to the 4Fe4S bacterial-type ferredoxin family. RnfB subfamily. In terms of assembly, the complex is composed of six subunits: RnfA, RnfB, RnfC, RnfD, RnfE and RnfG. It depends on [4Fe-4S] cluster as a cofactor.

It is found in the cell inner membrane. Its function is as follows. Part of a membrane-bound complex that couples electron transfer with translocation of ions across the membrane. This is Ion-translocating oxidoreductase complex subunit B from Sodalis glossinidius (strain morsitans).